A 580-amino-acid chain; its full sequence is MEPRVVTALLLSLAAALCSGISSINPDRSGEGRCQAIEIPMCKDIGYNMTRMPNLMGHENQKEAAIQLHEFAPLVEYGCHSHLKFFLCSLYAPMCTEQVSTPIPACRVMCEQARLKCSPIMEQFNFKWPDSLDCSKLPNKNDPNYLCMEAPNNGTDEAPRSSSILPPIFRPQRPNSGHEMYPKDPKGRSSCENSGKFHHVEKSASCAPLCSSSVDVYWSKNDKKFAFIWIAIWSLLCFFSSAFTVLTFLVDPLRFKYPERPIIFLSMCYCVYSVGYIIRLFAGADSIACDRDSGQLYVIQEGLESTGCTIVFLILYYFGMASSLWWVILTLTWFLAAGKKWGHEAIEANSSYFHLAAWAIPAVKTIMILVMRRVAGDELTGVCYVGSMDVNALTGFVLIPLACYLIIGTSFILSGFVALFHIRRVMKTGGENTDKLEKLMVRIGVFSVLYTVPATCVIACYFYERLNMDFWKILATQDKCKMDSQTKTLDCTMTSSIPAVEIFMVKIFMLLVVGITSGMWIWTSKTVQSWQNVFSKSLKKRNRNKPASVITSAGIYKKPQQPPKIHHGKYESALRSPTCV.

An N-terminal signal peptide occupies residues 1 to 20; sequence MEPRVVTALLLSLAAALCSG. Residues 21-224 lie on the Extracellular side of the membrane; the sequence is ISSINPDRSG…DVYWSKNDKK (204 aa). The 122-residue stretch at 29–150 folds into the FZ domain; that stretch reads SGEGRCQAIE…NDPNYLCMEA (122 aa). Intrachain disulfides connect C34–C95, C42–C88, C79–C117, C106–C147, and C110–C134. Residue N48 is glycosylated (N-linked (GlcNAc...) asparagine). N-linked (GlcNAc...) asparagine glycosylation occurs at N153. Residues 173–194 form a disordered region; it reads RPNSGHEMYPKDPKGRSSCENS. The span at 180–189 shows a compositional bias: basic and acidic residues; it reads MYPKDPKGRS. A helical membrane pass occupies residues 225 to 245; that stretch reads FAFIWIAIWSLLCFFSSAFTV. Over 246-261 the chain is Cytoplasmic; it reads LTFLVDPLRFKYPERP. A helical membrane pass occupies residues 262–282; it reads IIFLSMCYCVYSVGYIIRLFA. At 283–309 the chain is on the extracellular side; the sequence is GADSIACDRDSGQLYVIQEGLESTGCT. The chain crosses the membrane as a helical span at residues 310 to 330; it reads IVFLILYYFGMASSLWWVILT. Topologically, residues 331–350 are cytoplasmic; sequence LTWFLAAGKKWGHEAIEANS. Residues 351 to 371 traverse the membrane as a helical segment; sequence SYFHLAAWAIPAVKTIMILVM. Over 372-392 the chain is Extracellular; it reads RRVAGDELTGVCYVGSMDVNA. The chain crosses the membrane as a helical span at residues 393-413; it reads LTGFVLIPLACYLIIGTSFIL. At 414–442 the chain is on the cytoplasmic side; the sequence is SGFVALFHIRRVMKTGGENTDKLEKLMVR. The chain crosses the membrane as a helical span at residues 443 to 463; sequence IGVFSVLYTVPATCVIACYFY. Topologically, residues 464-501 are extracellular; it reads ERLNMDFWKILATQDKCKMDSQTKTLDCTMTSSIPAVE. Residues 502–522 traverse the membrane as a helical segment; it reads IFMVKIFMLLVVGITSGMWIW. At 523–580 the chain is on the cytoplasmic side; the sequence is TSKTVQSWQNVFSKSLKKRNRNKPASVITSAGIYKKPQQPPKIHHGKYESALRSPTCV. A Lys-Thr-X-X-X-Trp motif, mediates interaction with the PDZ domain of Dvl family members motif is present at residues 525 to 530; it reads KTVQSW. Residues 558-580 form a disordered region; that stretch reads KPQQPPKIHHGKYESALRSPTCV. The PDZ-binding motif lies at 578–580; the sequence is TCV.

It belongs to the G-protein coupled receptor Fz/Smo family. As to expression, expressed in liver, lung, brain, testis, heart and ovary.

The protein resides in the cell membrane. In terms of biological role, receptor for Wnt proteins. Most of frizzled receptors are coupled to the beta-catenin canonical signaling pathway, which leads to the activation of disheveled proteins, inhibition of GSK-3 kinase, nuclear accumulation of beta-catenin and activation of Wnt target genes. A second signaling pathway involving PKC and calcium fluxes has been seen for some family members, but it is not yet clear if it represents a distinct pathway or if it can be integrated in the canonical pathway, as PKC seems to be required for Wnt-mediated inactivation of GSK-3 kinase. Both pathways seem to involve interactions with G-proteins. May be involved in transduction and intercellular transmission of polarity information during tissue morphogenesis and/or in differentiated tissues. Activated by Wnt8. Could have an antagonizing activity in the morphogenesis during development. This chain is Frizzled-10-B (fzd10-b), found in Xenopus laevis (African clawed frog).